Reading from the N-terminus, the 400-residue chain is CCA-adding enzyme (400 aa).

Residues Gly28 and Arg31 each contribute to the ATP site. CTP is bound by residues Gly28 and Arg31. Residues Asp41 and Asp43 each contribute to the Mg(2+) site. ATP is bound by residues Arg112, Asp155, Arg158, Arg161, and Arg164. Residues Arg112, Asp155, Arg158, Arg161, and Arg164 each contribute to the CTP site.

Belongs to the tRNA nucleotidyltransferase/poly(A) polymerase family. Bacterial CCA-adding enzyme type 3 subfamily. In terms of assembly, homodimer. The cofactor is Mg(2+).

It carries out the reaction a tRNA precursor + 2 CTP + ATP = a tRNA with a 3' CCA end + 3 diphosphate. The catalysed reaction is a tRNA with a 3' CCA end + 2 CTP + ATP = a tRNA with a 3' CCACCA end + 3 diphosphate. Functionally, catalyzes the addition and repair of the essential 3'-terminal CCA sequence in tRNAs without using a nucleic acid template. Adds these three nucleotides in the order of C, C, and A to the tRNA nucleotide-73, using CTP and ATP as substrates and producing inorganic pyrophosphate. tRNA 3'-terminal CCA addition is required both for tRNA processing and repair. Also involved in tRNA surveillance by mediating tandem CCA addition to generate a CCACCA at the 3' terminus of unstable tRNAs. While stable tRNAs receive only 3'-terminal CCA, unstable tRNAs are marked with CCACCA and rapidly degraded. In Oceanobacillus iheyensis (strain DSM 14371 / CIP 107618 / JCM 11309 / KCTC 3954 / HTE831), this protein is CCA-adding enzyme.